A 933-amino-acid chain; its full sequence is Dual 3',5'-cyclic-AMP and -GMP phosphodiesterase 11A (933 aa).

The segment at 42–121 (HTSGQGASSL…LQRRASQKEL (80 aa)) is disordered. Phosphoserine occurs at positions 162, 163, and 239. GAF domains are found at residues 217-370 (DLTS…GIAI) and 402-558 (DLEK…GLGI). Serine 424 serves as a coordination point for 3',5'-cyclic GMP. The 325-residue stretch at 588–912 (SKAEVDKFKA…RKWEELHQKR (325 aa)) folds into the PDEase domain. The Proton donor role is filled by histidine 664. The a divalent metal cation site is built by histidine 668, histidine 704, aspartate 705, and aspartate 816. The segment at 913–933 (LQVSAASPDPASPMVAGEDRL) is disordered.

The protein belongs to the cyclic nucleotide phosphodiesterase family. It depends on a divalent metal cation as a cofactor. As to expression, expressed in testis and developing spermatoza.

It is found in the cytoplasm. The protein localises to the cytosol. The catalysed reaction is 3',5'-cyclic GMP + H2O = GMP + H(+). It carries out the reaction 3',5'-cyclic AMP + H2O = AMP + H(+). Inhibited by 3-isobutyl-1-methylxanthine (IBMX), zaprinast and dipyridamole. cGMP acts as an allosteric activator. Plays a role in signal transduction by regulating the intracellular concentration of cyclic nucleotides cAMP and cGMP. Catalyzes the hydrolysis of both cAMP and cGMP to 5'-AMP and 5'-GMP, respectively. In Mus musculus (Mouse), this protein is Dual 3',5'-cyclic-AMP and -GMP phosphodiesterase 11A (Pde11a).